A 307-amino-acid chain; its full sequence is uncharacterized protein (307 aa).

In terms of domain architecture, EAL spans 54–307 (RHYLSTSMRV…KALPVDFFRE (254 aa)). Transmembrane regions (helical) follow at residues 158–178 (PGFL…AHAL) and 203–223 (ALGV…LAYL).

It is found in the cell membrane. This is an uncharacterized protein from Mycobacterium tuberculosis (strain CDC 1551 / Oshkosh).